A 371-amino-acid polypeptide reads, in one-letter code: Aminomethyltransferase (371 aa).

It belongs to the GcvT family. In terms of assembly, the glycine cleavage system is composed of four proteins: P, T, L and H.

The enzyme catalyses N(6)-[(R)-S(8)-aminomethyldihydrolipoyl]-L-lysyl-[protein] + (6S)-5,6,7,8-tetrahydrofolate = N(6)-[(R)-dihydrolipoyl]-L-lysyl-[protein] + (6R)-5,10-methylene-5,6,7,8-tetrahydrofolate + NH4(+). Its function is as follows. The glycine cleavage system catalyzes the degradation of glycine. In Cellvibrio japonicus (strain Ueda107) (Pseudomonas fluorescens subsp. cellulosa), this protein is Aminomethyltransferase.